The chain runs to 552 residues: BAR/IMD domain-containing adapter protein 2 (552 aa).

Residues 1–250 (MSLSRSEEMH…VQLMQQVASN (250 aa)) enclose the IMD domain. Positions 132–153 (DALDKCQAELKKLRKKSQGSKN) form a coiled coil. Ser-261 bears the Phosphoserine mark. The tract at residues 295–369 (STPIMNGVTG…TLPRSSSMAA (75 aa)) is disordered. Position 296 is a phosphothreonine (Thr-296). Residues 320 to 334 (QPKSLSPPQSQSKLS) show a composition bias toward low complexity. Phosphoserine occurs at positions 323, 325, and 336. Phosphothreonine is present on Thr-340. Residue Ser-346 is modified to Phosphoserine. Residues 348–367 (TPKNSYATTENKTLPRSSSM) are compositionally biased toward polar residues. Position 360 is a phosphothreonine (Thr-360). Ser-366, Ser-384, Ser-395, and Ser-454 each carry phosphoserine. The region spanning 374–437 (NGRMRVKAIF…PFSYTRVLDS (64 aa)) is the SH3 domain. Residues 447–457 (LQQGKSSSTGN) show a composition bias toward polar residues. Disordered stretches follow at residues 447–466 (LQQG…DLAI) and 525–552 (TNDR…LAGR).

In terms of assembly, homodimer. Interacts with CDC42 and RAC1 that have been activated by GTP binding. Interacts with ATN1, ADGRB1, EPS8, SHANK1, SHANK2, SHANK3, WASF1 and WASF2. Interacts with ENAH after recruitment of CDC42. Interacts with TIAM1 and DIAPH1. Interacts (via SH3 domain) with E.coli effector protein EspF(U) (via PXXP motifs). Interacts with E.coli intimin receptor Tir. Post-translationally, phosphorylated on tyrosine residues by INSR in response to insulin treatment. Isoform 1 and isoform 4 are expressed almost exclusively in brain. Isoform 4 is barely detectable in placenta, prostate and testis. A short isoform is ubiquitous, with the highest expression in liver, prostate, testis and placenta.

The protein localises to the cytoplasm. It is found in the membrane. Its subcellular location is the cell projection. It localises to the filopodium. The protein resides in the ruffle. The protein localises to the cytoskeleton. In terms of biological role, adapter protein that links membrane-bound small G-proteins to cytoplasmic effector proteins. Necessary for CDC42-mediated reorganization of the actin cytoskeleton and for RAC1-mediated membrane ruffling. Involved in the regulation of the actin cytoskeleton by WASF family members and the Arp2/3 complex. Plays a role in neurite growth. Acts syngeristically with ENAH to promote filipodia formation. Plays a role in the reorganization of the actin cytoskeleton in response to bacterial infection. Participates in actin bundling when associated with EPS8, promoting filopodial protrusions. This Homo sapiens (Human) protein is BAR/IMD domain-containing adapter protein 2 (BAIAP2).